The sequence spans 263 residues: Post-GPI attachment to proteins factor 2 (263 aa).

The next 6 helical transmembrane spans lie at 16–36 (FVFC…LLSL), 69–89 (YIWR…AVAF), 109–129 (FLCN…LALT), 143–163 (CFGG…WLFS), 180–200 (YKIL…YLYW), and 208–228 (PGIY…NIFF).

The protein belongs to the PGAP2 family.

It localises to the golgi apparatus membrane. The protein localises to the endoplasmic reticulum membrane. Its function is as follows. Involved in the lipid remodeling steps of GPI-anchor maturation. Required for stable expression of GPI-anchored proteins at the cell surface. The sequence is that of Post-GPI attachment to proteins factor 2 from Caenorhabditis briggsae.